Consider the following 189-residue polypeptide: Segregation and condensation protein B (189 aa).

This sequence belongs to the ScpB family. As to quaternary structure, homodimer. Homodimerization may be required to stabilize the binding of ScpA to the Smc head domains. Component of a cohesin-like complex composed of ScpA, ScpB and the Smc homodimer, in which ScpA and ScpB bind to the head domain of Smc. The presence of the three proteins is required for the association of the complex with DNA.

The protein localises to the cytoplasm. In terms of biological role, participates in chromosomal partition during cell division. May act via the formation of a condensin-like complex containing Smc and ScpA that pull DNA away from mid-cell into both cell halves. This is Segregation and condensation protein B from Lachnoclostridium phytofermentans (strain ATCC 700394 / DSM 18823 / ISDg) (Clostridium phytofermentans).